The following is a 180-amino-acid chain: Large ribosomal subunit protein uL6 (180 aa).

The protein belongs to the universal ribosomal protein uL6 family. Part of the 50S ribosomal subunit.

In terms of biological role, this protein binds to the 23S rRNA, and is important in its secondary structure. It is located near the subunit interface in the base of the L7/L12 stalk, and near the tRNA binding site of the peptidyltransferase center. In Dictyoglomus thermophilum (strain ATCC 35947 / DSM 3960 / H-6-12), this protein is Large ribosomal subunit protein uL6.